A 141-amino-acid polypeptide reads, in one-letter code: HTH-type transcriptional repressor NsrR (141 aa).

The region spanning 2–129 is the HTH rrf2-type domain; the sequence is QLTNFTDFGL…DKHTIQDMLT (128 aa). The H-T-H motif DNA-binding region spans 28–51; sequence ITVVTETFDVSRNHMVKIINKLGQ. [2Fe-2S] cluster contacts are provided by Cys-91, Cys-96, and Cys-102.

[2Fe-2S] cluster is required as a cofactor.

Nitric oxide-sensitive repressor of genes involved in protecting the cell against nitrosative stress. May require iron for activity. The chain is HTH-type transcriptional repressor NsrR from Aliivibrio fischeri (strain ATCC 700601 / ES114) (Vibrio fischeri).